A 388-amino-acid polypeptide reads, in one-letter code: MNLHEYQAKALFAEYGLPVSEGFACDTPQEAVEAAGRIGGDMWVVKCQVHAGGRGKAGGVKVTGSKDEIRAFAEHWLGKNLVTYQTDEKGQPVAKILVESCTDIANELYLGAVVDRSTRRVVFMASTEGGVEIETVAEETPELIHKAIIDPLTGPQPYQARDLGFKLGLNPTQMKQFTKVFMGLAKMFEDHDFALLEINPLVITDEGNIHCLDGKIGIDGNALFRQEKIRDMHDPSQDDAREAHAAKFELNYVALDGNVGCMVNGAGLAMGTMDIVNLHGGKPANFLDVGGGATKERVAEAFKIILSDDNVKAVLVNIFGGIVRCDMIAEGIIGAVKEVGVTVPVVVRLEGTNADLGRDVLASSDLDIIAATSLTDAAEQVVKAAEGK.

The ATP-grasp domain occupies 9-244; sequence KALFAEYGLP…PSQDDAREAH (236 aa). ATP-binding positions include lysine 46, 53–55, glutamate 99, threonine 102, and glutamate 107; that span reads GRG. 2 residues coordinate Mg(2+): asparagine 199 and aspartate 213. Substrate is bound by residues asparagine 264 and 321–323; that span reads GIV.

The protein belongs to the succinate/malate CoA ligase beta subunit family. In terms of assembly, heterotetramer of two alpha and two beta subunits. It depends on Mg(2+) as a cofactor.

The enzyme catalyses succinate + ATP + CoA = succinyl-CoA + ADP + phosphate. The catalysed reaction is GTP + succinate + CoA = succinyl-CoA + GDP + phosphate. It functions in the pathway carbohydrate metabolism; tricarboxylic acid cycle; succinate from succinyl-CoA (ligase route): step 1/1. Succinyl-CoA synthetase functions in the citric acid cycle (TCA), coupling the hydrolysis of succinyl-CoA to the synthesis of either ATP or GTP and thus represents the only step of substrate-level phosphorylation in the TCA. The beta subunit provides nucleotide specificity of the enzyme and binds the substrate succinate, while the binding sites for coenzyme A and phosphate are found in the alpha subunit. The polypeptide is Succinate--CoA ligase [ADP-forming] subunit beta (Shewanella sediminis (strain HAW-EB3)).